Reading from the N-terminus, the 351-residue chain is C-X-C chemokine receptor type 1 (351 aa).

Residues 1–46 lie on the Extracellular side of the membrane; that stretch reads MSNATDPQMGDDDYDLNFTGMPPTDEDYSPCRLETQSLNKYVVIVT. N-linked (GlcNAc...) asparagine glycosylation is found at N3 and N17. The helical transmembrane segment at 47–67 threads the bilayer; it reads YALVFLLSLLGNSLVMLVILY. Over 68-76 the chain is Cytoplasmic; sequence RRVGRSVTD. A helical transmembrane segment spans residues 77–97; the sequence is VYLLNLAMADLLFALTLPIWA. Over 98 to 112 the chain is Extracellular; the sequence is ASKVNGWIFGTFLCK. C111 and C188 are joined by a disulfide. Residues 113-133 traverse the membrane as a helical segment; sequence VVSLLKEVNFYSGILLLACIS. Over 134–154 the chain is Cytoplasmic; it reads VDRYLAIVHATRTLIQKRHSV. The helical transmembrane segment at 155-175 threads the bilayer; that stretch reads KFVCLSCWGLSVILSLPFFLF. Residues 176–204 lie on the Extracellular side of the membrane; sequence RQAYHPNNSTPVCYEVLGNDTAKWRMVLR. N-linked (GlcNAc...) asparagine glycans are attached at residues N182 and N194. The helical transmembrane segment at 205-225 threads the bilayer; it reads ILPHTFGFTLPLLIMLFCYGF. Residues 226–243 lie on the Cytoplasmic side of the membrane; the sequence is TLHTLFKAHIGQKHRAMR. The helical transmembrane segment at 244-264 threads the bilayer; that stretch reads VIFAVVLIFLLCWLPYNLVLL. The Extracellular segment spans residues 265–289; sequence ADTLMRTHLIKESCERRNDIGRALD. Residues 290 to 310 traverse the membrane as a helical segment; it reads ATEILGFLHSCLNPIIYAFIG. Topologically, residues 311-351 are cytoplasmic; the sequence is QNFRHGFLKILATHGLVSKEFLARHHVTSYTSSSVNVSSNL.

The protein belongs to the G-protein coupled receptor 1 family. Interacts with IL8. Interacts with GNAI2.

The protein localises to the cell membrane. Its function is as follows. Receptor to interleukin-8, which is a powerful neutrophils chemotactic factor. Binding of IL-8 to the receptor causes activation of neutrophils. This response is mediated via a G-protein that activates a phosphatidylinositol-calcium second messenger system. The sequence is that of C-X-C chemokine receptor type 1 (CXCR1) from Macaca mulatta (Rhesus macaque).